A 122-amino-acid polypeptide reads, in one-letter code: Acidic phospholipase A2 homolog vipoxin A chain (122 aa).

7 disulfide bridges follow: cysteine 26/cysteine 115, cysteine 28/cysteine 44, cysteine 43/cysteine 95, cysteine 49/cysteine 122, cysteine 50/cysteine 88, cysteine 57/cysteine 81, and cysteine 75/cysteine 86.

Belongs to the phospholipase A2 family. Group II subfamily. D49 sub-subfamily. In terms of assembly, heterodimer of A and B (AC P14420) chains; non-covalently linked. The A chain (acidic) is non-toxic, and increases the toxicity of the B chain (basic). The A chain may act as factor stabilizing the complex structure and hence retaining its toxicity by preventing non-specific binding. Upon binding to the target membranes the A chain may dissociate. As to expression, expressed by the venom gland.

It is found in the secreted. Heterodimer: postsynaptic neurotoxin. Functionally, monomer: Acidic phospholipase A2 homolog that is non-toxic. The sequence is that of Acidic phospholipase A2 homolog vipoxin A chain from Vipera ammodytes meridionalis (Eastern sand viper).